The chain runs to 420 residues: Glucose-1-phosphate adenylyltransferase (420 aa).

Alpha-D-glucose 1-phosphate-binding positions include Y107, G172, 187–188, and S205; that span reads EK.

Belongs to the bacterial/plant glucose-1-phosphate adenylyltransferase family. In terms of assembly, homotetramer.

The catalysed reaction is alpha-D-glucose 1-phosphate + ATP + H(+) = ADP-alpha-D-glucose + diphosphate. It participates in glycan biosynthesis; glycogen biosynthesis. In terms of biological role, involved in the biosynthesis of ADP-glucose, a building block required for the elongation reactions to produce glycogen. Catalyzes the reaction between ATP and alpha-D-glucose 1-phosphate (G1P) to produce pyrophosphate and ADP-Glc. The chain is Glucose-1-phosphate adenylyltransferase from Rhizobium rhizogenes (strain K84 / ATCC BAA-868) (Agrobacterium radiobacter).